Reading from the N-terminus, the 121-residue chain is NAD(P)H-quinone oxidoreductase subunit M (121 aa).

It belongs to the complex I NdhM subunit family. NDH-1 can be composed of about 15 different subunits; different subcomplexes with different compositions have been identified which probably have different functions.

The protein resides in the cellular thylakoid membrane. It carries out the reaction a plastoquinone + NADH + (n+1) H(+)(in) = a plastoquinol + NAD(+) + n H(+)(out). The catalysed reaction is a plastoquinone + NADPH + (n+1) H(+)(in) = a plastoquinol + NADP(+) + n H(+)(out). Its function is as follows. NDH-1 shuttles electrons from an unknown electron donor, via FMN and iron-sulfur (Fe-S) centers, to quinones in the respiratory and/or the photosynthetic chain. The immediate electron acceptor for the enzyme in this species is believed to be plastoquinone. Couples the redox reaction to proton translocation, and thus conserves the redox energy in a proton gradient. Cyanobacterial NDH-1 also plays a role in inorganic carbon-concentration. This is NAD(P)H-quinone oxidoreductase subunit M from Synechococcus sp. (strain JA-2-3B'a(2-13)) (Cyanobacteria bacterium Yellowstone B-Prime).